Here is a 634-residue protein sequence, read N- to C-terminus: GTP-binding protein 4 (634 aa).

Residue Ala2 is modified to N-acetylalanine. Position 103 is an N6-acetyllysine; alternate (Lys103). Lys103 participates in a covalent cross-link: Glycyl lysine isopeptide (Lys-Gly) (interchain with G-Cter in SUMO2); alternate. A Phosphoserine modification is found at Ser122. The 172-residue stretch at 169-340 folds into the OBG-type G domain; it reads RTLLLCGYPN…VKTEACDRLL (172 aa). Residues 175-182, 221-225, and 289-292 contribute to the GTP site; these read GYPNVGKS, DTPGI, and NKCD. A Glycyl lysine isopeptide (Lys-Gly) (interchain with G-Cter in SUMO2) cross-link involves residue Lys332. A phosphoserine mark is found at Ser468, Ser470, and Ser472. Positions 494 to 634 are disordered; the sequence is KILQSKEKNK…KRKAGKKDRR (141 aa). Residue Lys534 forms a Glycyl lysine isopeptide (Lys-Gly) (interchain with G-Cter in SUMO2) linkage. Basic residues predominate over residues 544 to 554; it reads RRSRSVTRKRK. Position 558 is a phosphoserine (Ser558). Over residues 560 to 572 the composition is skewed to low complexity; sequence PPSSTARSRSCSR. Over residues 573 to 585 the composition is skewed to basic and acidic residues; it reads TPRDVSGLRDVKM. The span at 586–604 shows a compositional bias: basic residues; the sequence is VKKAKTMMKKAQKKMNRLG. The segment covering 605 to 618 has biased composition (basic and acidic residues); the sequence is KKGEADRHVFDMKP. The segment covering 619 to 634 has biased composition (basic residues); the sequence is KHLLSGKRKAGKKDRR.

It belongs to the TRAFAC class OBG-HflX-like GTPase superfamily. OBG GTPase family. NOG subfamily. In terms of assembly, associates with pre-60S ribosomal particles. Interacts with MINAS-60 (product of an alternative open reading frame of RBM10). In terms of tissue distribution, ubiquitous.

It is found in the nucleus. Its subcellular location is the nucleolus. In terms of biological role, involved in the biogenesis of the 60S ribosomal subunit. Acts as TP53 repressor, preventing TP53 stabilization and cell cycle arrest. This chain is GTP-binding protein 4 (Gtpbp4), found in Mus musculus (Mouse).